The chain runs to 207 residues: 2,3-bisphosphoglycerate-dependent phosphoglycerate mutase (207 aa).

Substrate is bound by residues 10–17, 23–24, R62, 89–92, K100, 116–117, and 160–161; these read RHGQSEWN, TG, ERDY, RR, and GN. H11 (tele-phosphohistidine intermediate) is an active-site residue. Residue E89 is the Proton donor/acceptor of the active site.

Belongs to the phosphoglycerate mutase family. BPG-dependent PGAM subfamily. In terms of assembly, homodimer.

The enzyme catalyses (2R)-2-phosphoglycerate = (2R)-3-phosphoglycerate. It functions in the pathway carbohydrate degradation; glycolysis; pyruvate from D-glyceraldehyde 3-phosphate: step 3/5. Its function is as follows. Catalyzes the interconversion of 2-phosphoglycerate and 3-phosphoglycerate. The polypeptide is 2,3-bisphosphoglycerate-dependent phosphoglycerate mutase (Xanthobacter autotrophicus (strain ATCC BAA-1158 / Py2)).